The primary structure comprises 123 residues: ATP synthase epsilon chain (123 aa).

Belongs to the ATPase epsilon chain family. F-type ATPases have 2 components, CF(1) - the catalytic core - and CF(0) - the membrane proton channel. CF(1) has five subunits: alpha(3), beta(3), gamma(1), delta(1), epsilon(1). CF(0) has three main subunits: a, b and c.

It is found in the cell inner membrane. Functionally, produces ATP from ADP in the presence of a proton gradient across the membrane. This is ATP synthase epsilon chain (atpC) from Helicobacter pylori (strain ATCC 700392 / 26695) (Campylobacter pylori).